Consider the following 487-residue polypeptide: Histamine H1 receptor (487 aa).

The Extracellular portion of the chain corresponds to 1-29 (MSLPNSSCLLEDKMCEGNKTTMASPQLMP). 2 N-linked (GlcNAc...) asparagine glycosylation sites follow: N5 and N18. A helical membrane pass occupies residues 30–50 (LVVVLSTISLVTVGLNLLVLY). Residues 51-64 (AVRSERKLHTVGNL) lie on the Cytoplasmic side of the membrane. The chain crosses the membrane as a helical span at residues 65–89 (YIVSLSVADLIVGAVVMPMNILYLL). The Extracellular portion of the chain corresponds to 90 to 97 (MSKWSLGR). The helical transmembrane segment at 98–123 (PLCLFWLSMDYVASTASIFSVFILCI) threads the bilayer. C100 and C180 are joined by a disulfide. D107 and T112 together coordinate histamine. An important for agonist binding region spans residues 107–112 (DYVAST). Over 124 to 144 (DRYRSVQQPLRYLKYRTKTRA) the chain is Cytoplasmic. 2 positions are modified to phosphothreonine: T140 and T142. The helical transmembrane segment at 145 to 164 (SATILGAWFLSFLWVIPILG) threads the bilayer. The Extracellular portion of the chain corresponds to 165 to 188 (WNHFRQQISVRREDKCETDFYDVT). Residues 189 to 211 (WFKVMTAIINFYLPTLLMLWFYA) traverse the membrane as a helical segment. Histamine is bound at residue N198. Residues 212–416 (KIYKAVQKHC…MNRERKAAKQ (205 aa)) lie on the Cytoplasmic side of the membrane. S230 is modified (phosphoserine). Positions 238-261 (KLRPENPKGDAKKPGKESPWEVLK) are enriched in basic and acidic residues. Residues 238 to 286 (KLRPENPKGDAKKPGKESPWEVLKRKPKDAGGGSVLKSPSQTPKEMKSP) form a disordered region. T279 is modified (phosphothreonine). Phosphoserine is present on residues S344 and S347. The interval 345 to 379 (EISEDQMLGDSQSFSRTDSDTTTETAPGKGKLRSG) is disordered. The segment covering 353-369 (GDSQSFSRTDSDTTTET) has biased composition (polar residues). Residues S380, S396, and S398 each carry the phosphoserine modification. The helical transmembrane segment at 417–440 (LGFIMAAFILCWIPYFIFFMVIAF) threads the bilayer. Positions 424-428 (FILCW) are important for agonist binding. Y431 is a binding site for histamine. C441 and C444 form a disulfide bridge. Over 441 to 446 (CKNCCN) the chain is Extracellular. Residues 447–469 (EHLHMFTIWLGYINSTLNPLIYP) form a helical membrane-spanning segment. At 470 to 487 (LCNENFKKTFKRILHIRS) the chain is on the cytoplasmic side.

The protein belongs to the G-protein coupled receptor 1 family. In terms of processing, phosphorylation at sites in the second and third cytoplasmic loops independently contribute to agonist-induced receptor down-regulation.

It is found in the cell membrane. In terms of biological role, G-protein-coupled receptor for histamine, a biogenic amine that functions as an immune modulator and a neurotransmitter. Through the H1 receptor, histamine mediates the contraction of smooth muscles and increases capillary permeability due to contraction of terminal venules. Also mediates neurotransmission in the central nervous system and thereby regulates circadian rhythms, emotional and locomotor activities as well as cognitive functions. This Pongo pygmaeus (Bornean orangutan) protein is Histamine H1 receptor.